The primary structure comprises 286 residues: Acyl-CoA-binding domain-containing protein 6 (286 aa).

An ACB domain is found at 32-117; sequence LQCQFEQAAK…VKKLDPDWSP (86 aa). An acyl-CoA is bound by residues 59-63, Lys85, and Tyr104; that span reads YARYK. ANK repeat units lie at residues 182-211 and 215-244; these read EGRS…HINM and EGQT…DPSL.

The protein localises to the cytoplasm. The protein resides in the nucleus. Its function is as follows. Binds long-chain acyl-coenzyme A molecules with a strong preference for unsaturated C18:1-CoA. Does not bind fatty acids. Plays a role in protein N-myristoylation. The chain is Acyl-CoA-binding domain-containing protein 6 (acbd6) from Xenopus laevis (African clawed frog).